Here is a 140-residue protein sequence, read N- to C-terminus: Small ribosomal subunit protein uS19 (140 aa).

The protein belongs to the universal ribosomal protein uS19 family.

In terms of biological role, protein S19 forms a complex with S13 that binds strongly to the 16S ribosomal RNA. The protein is Small ribosomal subunit protein uS19 (rps19) of Saccharolobus solfataricus (strain ATCC 35092 / DSM 1617 / JCM 11322 / P2) (Sulfolobus solfataricus).